The following is a 131-amino-acid chain: Cruxhalorhodopsin-1 (131 aa).

The helical transmembrane segment at 1-11 (PMILLALGLLA) threads the bilayer. The Cytoplasmic segment spans residues 12–14 (DTD). A helical transmembrane segment spans residues 15–38 (IASLFTAITMDIGMCVTGLAAALI). Topologically, residues 39–41 (TSS) are extracellular. Residues 42 to 64 (HLLRWVFYGISCAFFVAVLYVLL) form a helical membrane-spanning segment. Over 65–76 (VQWPADAEAAGT) the chain is Cytoplasmic. Residues 77 to 100 (SEIFGTLKILTVVLWLGYPILWAL) form a helical membrane-spanning segment. At 101–109 (GSEGVALLS) the chain is on the extracellular side. A helical transmembrane segment spans residues 110–131 (VGVTSWGYSGLDILAKYVFAFI). An N6-(retinylidene)lysine modification is found at Lys125.

Belongs to the archaeal/bacterial/fungal opsin family.

Its subcellular location is the cell membrane. In terms of biological role, light-driven chloride pump. This Haloarcula argentinensis protein is Cruxhalorhodopsin-1 (choP1).